The following is a 433-amino-acid chain: Homogentisate 1,2-dioxygenase (433 aa).

The active-site Proton acceptor is H288. Fe cation-binding residues include H331 and E337. Positions 346 and 367 each coordinate homogentisate. H367 contributes to the Fe cation binding site.

The protein belongs to the homogentisate dioxygenase family. In terms of assembly, hexamer; dimer of trimers. It depends on Fe cation as a cofactor.

The catalysed reaction is homogentisate + O2 = 4-maleylacetoacetate + H(+). It functions in the pathway amino-acid degradation; L-phenylalanine degradation; acetoacetate and fumarate from L-phenylalanine: step 4/6. Functionally, involved in the catabolism of homogentisate (2,5-dihydroxyphenylacetate or 2,5-OH-PhAc), a central intermediate in the degradation of phenylalanine and tyrosine. Catalyzes the oxidative ring cleavage of the ar omatic ring of 2,5-dihydroxyphenylacetate to yield maleylacetoacetate. This chain is Homogentisate 1,2-dioxygenase, found in Pseudomonas putida (strain ATCC 47054 / DSM 6125 / CFBP 8728 / NCIMB 11950 / KT2440).